The chain runs to 135 residues: MVLESIARVIKVQLPAYLKRLPIPDSIAGFIRLTVSEWLRLLPFLGVLALLGYLAIRPFLLKKKQQKDSLINLKIQKENPKVVNEINIEDLHLAKAAYCRCWRSKTFPVCDGSHNKHNELTGDNVGPLILKKKEV.

The Lumenal portion of the chain corresponds to 1-37; sequence MVLESIARVIKVQLPAYLKRLPIPDSIAGFIRLTVSE. Residues 38–60 form a helical membrane-spanning segment; the sequence is WLRLLPFLGVLALLGYLAIRPFL. The Cytoplasmic portion of the chain corresponds to 61-135; the sequence is LKKKQQKDSL…GPLILKKKEV (75 aa). Cysteine 99, cysteine 101, cysteine 110, and histidine 114 together coordinate [2Fe-2S] cluster.

This sequence belongs to the CISD protein family. CISD2 subfamily. Homodimer. Requires [2Fe-2S] cluster as cofactor.

It is found in the endoplasmic reticulum membrane. The protein localises to the mitochondrion outer membrane. In terms of biological role, regulator of autophagy that contributes to antagonize becn1-mediated cellular autophagy at the endoplasmic reticulum. Participates in the interaction of bcl2 with becn1 and is required for bcl2-mediated depression of endoplasmic reticulum Ca(2+) stores during autophagy. This Xenopus laevis (African clawed frog) protein is CDGSH iron-sulfur domain-containing protein 2A (cisd2-a).